Consider the following 455-residue polypeptide: uncharacterized protein (455 aa).

This is an uncharacterized protein from Acanthamoeba polyphaga (Amoeba).